The primary structure comprises 487 residues: Betaine aldehyde dehydrogenase (487 aa).

K(+) contacts are provided by isoleucine 27 and aspartate 93. 149-151 (GAW) contributes to the NAD(+) binding site. Lysine 161 (charge relay system) is an active-site residue. Residues 175 to 178 (KPSE) and 228 to 231 (SVPT) contribute to the NAD(+) site. Leucine 243 lines the K(+) pocket. Glutamate 249 acts as the Proton acceptor in catalysis. Glycine 251, cysteine 283, and glutamate 384 together coordinate NAD(+). The active-site Nucleophile is the cysteine 283. Cysteine 283 is subject to Cysteine sulfenic acid (-SOH). K(+)-binding residues include lysine 454 and glycine 457. The active-site Charge relay system is the glutamate 461.

The protein belongs to the aldehyde dehydrogenase family. In terms of assembly, dimer of dimers. K(+) is required as a cofactor.

It carries out the reaction betaine aldehyde + NAD(+) + H2O = glycine betaine + NADH + 2 H(+). It functions in the pathway amine and polyamine biosynthesis; betaine biosynthesis via choline pathway; betaine from betaine aldehyde: step 1/1. In terms of biological role, involved in the biosynthesis of the osmoprotectant glycine betaine. Catalyzes the irreversible oxidation of betaine aldehyde to the corresponding acid. The chain is Betaine aldehyde dehydrogenase from Brucella melitensis biotype 2 (strain ATCC 23457).